The sequence spans 430 residues: Adenylosuccinate synthetase (430 aa).

GTP contacts are provided by residues 12 to 18 (GDEGKGK) and 40 to 42 (GHT). Asp-13 functions as the Proton acceptor in the catalytic mechanism. Mg(2+) contacts are provided by Asp-13 and Gly-40. IMP is bound by residues 13–16 (DEGK), 38–41 (NAGH), Thr-130, Arg-144, Gln-224, Thr-239, and Arg-303. His-41 serves as the catalytic Proton donor. Substrate is bound at residue 299 to 305 (VNTGRKR). GTP-binding positions include Arg-305, 331-333 (KLD), and 413-415 (STS).

This sequence belongs to the adenylosuccinate synthetase family. Homodimer. It depends on Mg(2+) as a cofactor.

It is found in the cytoplasm. It carries out the reaction IMP + L-aspartate + GTP = N(6)-(1,2-dicarboxyethyl)-AMP + GDP + phosphate + 2 H(+). Its pathway is purine metabolism; AMP biosynthesis via de novo pathway; AMP from IMP: step 1/2. Its function is as follows. Plays an important role in the de novo pathway of purine nucleotide biosynthesis. Catalyzes the first committed step in the biosynthesis of AMP from IMP. The protein is Adenylosuccinate synthetase of Nitrobacter winogradskyi (strain ATCC 25391 / DSM 10237 / CIP 104748 / NCIMB 11846 / Nb-255).